The chain runs to 90 residues: MEESGIVGFTVTGAVEKVTDFRTAPFCSQAVFAQMLGLEDITEDVVRGWVETKTIPTAKIGRRRVVNLHRIRRDLDRGKSIFCQGDYDGD.

This Pseudomonas aeruginosa (Bacteriophage Pf1) protein is 10.1 kDa protein.